The sequence spans 263 residues: uncharacterized protein (263 aa).

12-19 is a binding site for ATP; sequence KGGVGKTT.

It belongs to the ParA family. MinD subfamily.

This is an uncharacterized protein from Methanocaldococcus jannaschii (strain ATCC 43067 / DSM 2661 / JAL-1 / JCM 10045 / NBRC 100440) (Methanococcus jannaschii).